The primary structure comprises 955 residues: Leucine--tRNA ligase (955 aa).

A 'HIGH' region motif is present at residues 66-77 (PYPSGSGLHVGH). The 'KMSKS' region motif lies at 725-729 (KMGKS). Residue Lys728 coordinates ATP.

The protein belongs to the class-I aminoacyl-tRNA synthetase family.

It localises to the cytoplasm. The catalysed reaction is tRNA(Leu) + L-leucine + ATP = L-leucyl-tRNA(Leu) + AMP + diphosphate. This Saccharopolyspora erythraea (strain ATCC 11635 / DSM 40517 / JCM 4748 / NBRC 13426 / NCIMB 8594 / NRRL 2338) protein is Leucine--tRNA ligase.